Here is a 266-residue protein sequence, read N- to C-terminus: MAPPQERDYIGLSPAAAAALATELRLGLPGTAEEAESEGGGGGGTDAAPLTLELLPKGGAKRGFADAIVGGPAGQRREAAGGKAAAAAAEAEEEEEKKKAQAPAAKAQVVGWPPIRSYRKNTMAMSQPALKGKDDGEAKQAPASGCLYVKVSMDGAPYLRKVDLKMYKNYKELSLALEKMFSCFTVGHGESNGKSGRDGLSDCRLMDLKNGTELVLTYEDKDEDWMLVGDVPWRMFTDSCRRLRIMKGSDAVGLAPRATDKSKNRN.

The EAR-like (transcriptional repression) signature appears at 24-28 (LRLGL). The disordered stretch occupies residues 27 to 50 (GLPGTAEEAESEGGGGGGTDAAPL). The region spanning 146–248 (CLYVKVSMDG…SCRRLRIMKG (103 aa)) is the PB1 domain.

It belongs to the Aux/IAA family. In terms of assembly, homodimers and heterodimers. Highly expressed in flowers. Expressed in roots and seedlings.

The protein resides in the nucleus. Aux/IAA proteins are short-lived transcriptional factors that function as repressors of early auxin response genes at low auxin concentrations. This Oryza sativa subsp. japonica (Rice) protein is Auxin-responsive protein IAA21 (IAA21).